The chain runs to 295 residues: Protein gurken (295 aa).

The first 26 residues, 1–26, serve as a signal peptide directing secretion; that stretch reads MMQIPFTRIFKVIFVLSTIVAVTDCC. Over 27 to 247 the chain is Extracellular; the sequence is SSRILLLREH…TAQRKVRMAH (221 aa). Disordered regions lie at residues 78–111 and 124–175; these read EASA…SIAA and TDTW…NDKE. Residues 124-139 are compositionally biased toward polar residues; the sequence is TDTWLASESSTPITDS. 2 stretches are compositionally biased toward low complexity: residues 140 to 152 and 159 to 171; these read ETVT…THTG and SSSS…TPSP. The EGF-like domain occupies 179–224; the sequence is QMLPCSEAYNTSFCLNGGHCFQHPMVNNTVFHSCLCVNDYDGERCA. 3 disulfides stabilise this stretch: C183–C198, C192–C212, and C214–C223. N-linked (GlcNAc...) asparagine glycosylation is found at N188 and N205. An interaction with cni region spans residues 215–245; the sequence is VNDYDGERCAYKSWNGDYIYSPPTAQRKVRM. A helical membrane pass occupies residues 248–268; it reads IVFSFPVLLMLSSLYVLFAAV. Residues 269 to 295 lie on the Cytoplasmic side of the membrane; sequence FMLRNVPDYRRKQQQLHLHKQRFFVRC.

Interacts with cni. As to expression, expressed in nurse cells and oocyte up to oogenesis stage 7. Specifically accumulates in dorsal anterior corner of the oocyte during stages 9/10, at later stages expression is seen as an anterior ring. In stage 10 ovaries, it is concentrated between the oocyte nucleus and the adjacent oolemma. During vitellogenesis stage it can be detected at the oocyte surface, especially on the microvilli. It is also found at the microvilli covering the apical surface of the follicular epithelium and within follicle cells.

The protein localises to the cell membrane. Critical for defining the anterior-posterior and dorsal-ventral axes of the egg. May signal directly to dorsal follicle cells through the receptor torpedo (top). During oogenesis this signaling pathway instructs follicle cells to follow a dorsal pathway of development rather than the default ventral pathway. In Drosophila melanogaster (Fruit fly), this protein is Protein gurken (grk).